Reading from the N-terminus, the 292-residue chain is Shikimate dehydrogenase (NADP(+)) (292 aa).

Residues 22–24 (SLS) and serine 69 contribute to the shikimate site. The Proton acceptor role is filled by lysine 73. Shikimate is bound by residues asparagine 94 and aspartate 111. Residues 135–139 (GVGGA) and isoleucine 236 contribute to the NADP(+) site. Tyrosine 238 contributes to the shikimate binding site. Glycine 260 contributes to the NADP(+) binding site.

The protein belongs to the shikimate dehydrogenase family. As to quaternary structure, homodimer.

It carries out the reaction shikimate + NADP(+) = 3-dehydroshikimate + NADPH + H(+). It participates in metabolic intermediate biosynthesis; chorismate biosynthesis; chorismate from D-erythrose 4-phosphate and phosphoenolpyruvate: step 4/7. Functionally, involved in the biosynthesis of the chorismate, which leads to the biosynthesis of aromatic amino acids. Catalyzes the reversible NADPH linked reduction of 3-dehydroshikimate (DHSA) to yield shikimate (SA). This is Shikimate dehydrogenase (NADP(+)) from Streptococcus pyogenes serotype M18 (strain MGAS8232).